Here is a 388-residue protein sequence, read N- to C-terminus: Putative F-box protein At3g17490 (388 aa).

The F-box domain maps to 1 to 46; sequence MMMPHLSEDLVEEILSRVPAISLKRLRYTCKQWNALFNDQRFSKKH.

The protein is Putative F-box protein At3g17490 of Arabidopsis thaliana (Mouse-ear cress).